A 356-amino-acid polypeptide reads, in one-letter code: C-X-C chemokine receptor type 2 (356 aa).

At 1-46 (MEYINWDNYSLEDLFGDIDNYTYNTEMPIIPADSAPCRPESLDINK) the chain is on the extracellular side. 2 N-linked (GlcNAc...) asparagine glycosylation sites follow: Asn-8 and Asn-20. The chain crosses the membrane as a helical span at residues 47–73 (YAVVVIYVLVFVLNLLGNSLVIMVVLY). At 74–82 (SRVSHSVTD) the chain is on the cytoplasmic side. Residues 83–103 (VYLLNLAIADLLFALTLPIWA) form a helical membrane-spanning segment. The Extracellular portion of the chain corresponds to 104–118 (VSKVKGWIFGTPLCK). A disulfide bridge links Cys-117 with Cys-194. Residues 119-140 (IVSLLKEVNFYSGILLLASISM) form a helical membrane-spanning segment. The Cytoplasmic segment spans residues 141–161 (DRYLAIVHATRRLTQKKHWVK). The helical transmembrane segment at 162–181 (FICLGIWALSLILSLPIFVF) threads the bilayer. Residues 182–206 (RRAINPPYSSPVCYEDMGTNTTKLR) are Extracellular-facing. The helical transmembrane segment at 207–229 (IVMRALPQTFGFIVPLMIMLFCY) threads the bilayer. Topologically, residues 230-249 (GLTLRTLFEAHMGQKHRAMR) are cytoplasmic. A helical membrane pass occupies residues 250–269 (VIFAVVLVFLLCWLPYNLVA). Residues 270–290 (DTLMRLQAIEETCQRRNDIGR) lie on the Extracellular side of the membrane. A helical transmembrane segment spans residues 291–311 (ALDATEILGFFHSCLNPLIYA). Topologically, residues 312 to 356 (FIGQKFRHGLLKIMAFHGLISKEYLPKDSRPSFVGSSSANTSTTF) are cytoplasmic.

The protein belongs to the G-protein coupled receptor 1 family. In terms of assembly, interacts with IL8. Interacts with GNAI2. Phosphorylated upon ligand binding; which is required for desensitization.

The protein localises to the cell membrane. In terms of biological role, receptor for interleukin-8 which is a powerful neutrophil chemotactic factor. Binding of IL-8 to the receptor causes activation of neutrophils. This response is mediated via a G-protein that activates a phosphatidylinositol-calcium second messenger system. Binds to IL-8 with high affinity. Also binds with high affinity to CXCL3, GRO/MGSA and NAP-2. In Canis lupus familiaris (Dog), this protein is C-X-C chemokine receptor type 2 (CXCR2).